Reading from the N-terminus, the 268-residue chain is NADH-quinone oxidoreductase subunit B 2 (268 aa).

Cys-42, Cys-43, Cys-108, and Cys-138 together coordinate [4Fe-4S] cluster. A disordered region spans residues 237 to 268 (SPNKAKGVAPEIRHNDLKRPAVEVDHARDEQR). Residues 247 to 268 (EIRHNDLKRPAVEVDHARDEQR) are compositionally biased toward basic and acidic residues.

This sequence belongs to the complex I 20 kDa subunit family. As to quaternary structure, NDH-1 is composed of 14 different subunits. Subunits NuoB, C, D, E, F, and G constitute the peripheral sector of the complex. It depends on [4Fe-4S] cluster as a cofactor.

It is found in the cell membrane. It catalyses the reaction a quinone + NADH + 5 H(+)(in) = a quinol + NAD(+) + 4 H(+)(out). In terms of biological role, NDH-1 shuttles electrons from NADH, via FMN and iron-sulfur (Fe-S) centers, to quinones in the respiratory chain. The immediate electron acceptor for the enzyme in this species is believed to be ubiquinone. Couples the redox reaction to proton translocation (for every two electrons transferred, four hydrogen ions are translocated across the cytoplasmic membrane), and thus conserves the redox energy in a proton gradient. This Roseiflexus castenholzii (strain DSM 13941 / HLO8) protein is NADH-quinone oxidoreductase subunit B 2.